The following is a 345-amino-acid chain: Dihydroorotate dehydrogenase (quinone) (345 aa).

FMN is bound by residues 65–69 (AGLDK) and threonine 89. Residue lysine 69 participates in substrate binding. 114–118 (NRMGF) contributes to the substrate binding site. Residues asparagine 146 and asparagine 179 each coordinate FMN. Residue asparagine 179 participates in substrate binding. Residue serine 182 is the Nucleophile of the active site. Asparagine 184 contributes to the substrate binding site. Positions 224 and 252 each coordinate FMN. Residue 253–254 (NT) coordinates substrate. FMN contacts are provided by residues glycine 275, glycine 304, and 325–326 (YT).

The protein belongs to the dihydroorotate dehydrogenase family. Type 2 subfamily. In terms of assembly, monomer. FMN serves as cofactor.

Its subcellular location is the cell membrane. The catalysed reaction is (S)-dihydroorotate + a quinone = orotate + a quinol. It participates in pyrimidine metabolism; UMP biosynthesis via de novo pathway; orotate from (S)-dihydroorotate (quinone route): step 1/1. Its function is as follows. Catalyzes the conversion of dihydroorotate to orotate with quinone as electron acceptor. This is Dihydroorotate dehydrogenase (quinone) from Janthinobacterium sp. (strain Marseille) (Minibacterium massiliensis).